Consider the following 108-residue polypeptide: Probable chaperone-like protein YdbL (108 aa).

An N-terminal signal peptide occupies residues 1–21; it reads MKKTLLLCAFLVGLVSSNVMA.

The protein resides in the periplasm. Functionally, probably acts as a chaperone-like protein that contributes to, but is not required for, the formation of the YdbH-YnbE intermembrane bridge. Affects the function and the structure of the YdbH-YnbE complex. Overexpression of ydbL causes a negative effect on YdbH-YnbE function. This chain is Probable chaperone-like protein YdbL (ydbL), found in Escherichia coli (strain K12).